We begin with the raw amino-acid sequence, 301 residues long: Prestalk A differentiation protein A (301 aa).

This sequence belongs to the NmrA-type oxidoreductase family.

Its function is as follows. Involved in development and cell differentiation. The protein is Prestalk A differentiation protein A (padA) of Dictyostelium discoideum (Social amoeba).